Consider the following 229-residue polypeptide: Secretory carrier-associated membrane protein 4 (229 aa).

Topologically, residues Met1–Arg39 are cytoplasmic. Transmembrane regions (helical) follow at residues Ile40–Ala60, Trp61–Phe81, Phe105–Gly125, and Val149–Ile169. At Met170–Pro229 the chain is on the cytoplasmic side. A Phosphothreonine modification is found at Thr194. The segment at Phe208–Pro229 is disordered.

This sequence belongs to the SCAMP family.

The protein localises to the membrane. Its function is as follows. Probably involved in membrane protein trafficking. The protein is Secretory carrier-associated membrane protein 4 (SCAMP4) of Homo sapiens (Human).